A 102-amino-acid chain; its full sequence is Citrate lyase acyl carrier protein (102 aa).

Ser14 carries the post-translational modification O-(phosphoribosyl dephospho-coenzyme A)serine.

Belongs to the CitD family. As to quaternary structure, oligomer with a subunit composition of (alpha,beta,gamma)6.

The protein localises to the cytoplasm. Covalent carrier of the coenzyme of citrate lyase. This chain is Citrate lyase acyl carrier protein, found in Streptococcus mutans serotype c (strain ATCC 700610 / UA159).